Reading from the N-terminus, the 269-residue chain is Triosephosphate isomerase (269 aa).

Asn-8–Lys-10 is a binding site for substrate. His-105 (electrophile) is an active-site residue. Glu-183 functions as the Proton acceptor in the catalytic mechanism. Substrate-binding positions include Gly-189, Ser-227, and Gly-248–Gly-249.

It belongs to the triosephosphate isomerase family. Homodimer.

The protein resides in the cytoplasm. It catalyses the reaction D-glyceraldehyde 3-phosphate = dihydroxyacetone phosphate. Its pathway is carbohydrate biosynthesis; gluconeogenesis. The protein operates within carbohydrate degradation; glycolysis; D-glyceraldehyde 3-phosphate from glycerone phosphate: step 1/1. Its function is as follows. Involved in the gluconeogenesis. Catalyzes stereospecifically the conversion of dihydroxyacetone phosphate (DHAP) to D-glyceraldehyde-3-phosphate (G3P). The protein is Triosephosphate isomerase of Psychrobacter cryohalolentis (strain ATCC BAA-1226 / DSM 17306 / VKM B-2378 / K5).